A 230-amino-acid chain; its full sequence is ATP phosphoribosyltransferase (230 aa).

This sequence belongs to the ATP phosphoribosyltransferase family. Short subfamily. As to quaternary structure, heteromultimer composed of HisG and HisZ subunits.

The protein resides in the cytoplasm. It catalyses the reaction 1-(5-phospho-beta-D-ribosyl)-ATP + diphosphate = 5-phospho-alpha-D-ribose 1-diphosphate + ATP. It participates in amino-acid biosynthesis; L-histidine biosynthesis; L-histidine from 5-phospho-alpha-D-ribose 1-diphosphate: step 1/9. In terms of biological role, catalyzes the condensation of ATP and 5-phosphoribose 1-diphosphate to form N'-(5'-phosphoribosyl)-ATP (PR-ATP). Has a crucial role in the pathway because the rate of histidine biosynthesis seems to be controlled primarily by regulation of HisG enzymatic activity. The sequence is that of ATP phosphoribosyltransferase from Agrobacterium fabrum (strain C58 / ATCC 33970) (Agrobacterium tumefaciens (strain C58)).